Reading from the N-terminus, the 293-residue chain is Forkhead box protein N5 (293 aa).

Positions 104 to 152 (TSPPLQLQRQLSNDYSTVEDSEDEAPTSCSDVLTDDDDSYNPWQPKHKR) are disordered. A compositionally biased stretch (polar residues) spans 106–119 (PPLQLQRQLSNDYS). A DNA-binding region (fork-head) is located at residues 176–273 (RPPLNYCNLI…NEMHALSDDL (98 aa)).

The protein localises to the nucleus. The sequence is that of Forkhead box protein N5 from Xenopus tropicalis (Western clawed frog).